Here is a 325-residue protein sequence, read N- to C-terminus: MYNVRTDLAVESREIYKHRYNREIDGVVFEEKTVEEDIKVTNVDILNEEGAKAMGKPIGRYVTIDIPEYTHYDGGIMDEVSHVVAASLEELINLPEERTALVVGLGNWNVTPDAIGPKVVGKLMVTRHLKKVMPDIIDDSVRPVCAIAPGVLGITGIETGEIIKSLVEKINPDLVVCIDALASRKLERVARTIQISNTGISPGAGVGNHRMQINEESLGIPVIALGVPTVVDAATIANDAMDLVLDEMINQADAGKEFYNILNNIDKNEKGMMIKSLLDPYVGDLMVTPKEIDDIIESVSKIIANGINIALQPNMVLEDINKFLN.

Positions 1 to 7 are excised as a propeptide; that stretch reads MYNVRTD.

This sequence belongs to the peptidase A25 family. As to quaternary structure, homotetramer. In terms of processing, autoproteolytically processed. The inactive tetrameric zymogen termed p46 autoprocesses to a smaller form termed p41, which is active only during spore germination.

The enzyme catalyses Endopeptidase action with P4 Glu or Asp, P1 preferably Glu &gt; Asp, P1' hydrophobic and P2' Ala.. Functionally, initiates the rapid degradation of small, acid-soluble proteins during spore germination. The protein is Germination protease of Clostridium perfringens (strain ATCC 13124 / DSM 756 / JCM 1290 / NCIMB 6125 / NCTC 8237 / Type A).